A 299-amino-acid polypeptide reads, in one-letter code: tRNA dimethylallyltransferase (299 aa).

13–20 (GPTASGKT) contacts ATP. 15–20 (TASGKT) provides a ligand contact to substrate. An interaction with substrate tRNA region spans residues 38-41 (DSRQ).

The protein belongs to the IPP transferase family. As to quaternary structure, monomer. It depends on Mg(2+) as a cofactor.

It catalyses the reaction adenosine(37) in tRNA + dimethylallyl diphosphate = N(6)-dimethylallyladenosine(37) in tRNA + diphosphate. Its function is as follows. Catalyzes the transfer of a dimethylallyl group onto the adenine at position 37 in tRNAs that read codons beginning with uridine, leading to the formation of N6-(dimethylallyl)adenosine (i(6)A). The sequence is that of tRNA dimethylallyltransferase from Prochlorococcus marinus (strain MIT 9211).